The chain runs to 254 residues: Alcohol dehydrogenase (254 aa).

Residue 10 to 33 coordinates NAD(+); sequence FVAGLGGIGLDTSREIVKSGPKNL. Ser138 lines the substrate pocket. Tyr151 (proton acceptor) is an active-site residue.

The protein belongs to the short-chain dehydrogenases/reductases (SDR) family. As to quaternary structure, homodimer.

The enzyme catalyses a primary alcohol + NAD(+) = an aldehyde + NADH + H(+). It catalyses the reaction a secondary alcohol + NAD(+) = a ketone + NADH + H(+). The protein is Alcohol dehydrogenase (Adh) of Drosophila picticornis (Fruit fly).